The primary structure comprises 560 residues: Eukaryotic translation initiation factor 3 subunit D-1 (560 aa).

The segment at valine 98 to serine 166 is disordered. A compositionally biased stretch (basic residues) spans lysine 100–asparagine 121. The residue at position 128 (threonine 128) is a Phosphothreonine. The span at glycine 147–histidine 156 shows a compositional bias: basic residues. The tract at residues glutamate 291–proline 305 is RNA gate.

It belongs to the eIF-3 subunit D family. In terms of assembly, component of the eukaryotic translation initiation factor 3 (eIF-3) complex. The eIF-3 complex interacts with pix.

It localises to the cytoplasm. Its function is as follows. mRNA cap-binding component of the eukaryotic translation initiation factor 3 (eIF-3) complex, which is involved in protein synthesis of a specialized repertoire of mRNAs and, together with other initiation factors, stimulates binding of mRNA and methionyl-tRNAi to the 40S ribosome. The eIF-3 complex specifically targets and initiates translation of a subset of mRNAs involved in cell proliferation. In the eIF-3 complex, eif3d specifically recognizes and binds the 7-methylguanosine cap of a subset of mRNAs. The protein is Eukaryotic translation initiation factor 3 subunit D-1 of Drosophila simulans (Fruit fly).